The sequence spans 481 residues: Ribulose bisphosphate carboxylase large chain (481 aa).

Positions 1-2 (MS) are excised as a propeptide. Residue Pro-3 is modified to N-acetylproline. Lys-14 is subject to N6,N6,N6-trimethyllysine. Substrate-binding residues include Asn-123 and Thr-173. Lys-175 (proton acceptor) is an active-site residue. Lys-177 is a binding site for substrate. 3 residues coordinate Mg(2+): Lys-201, Asp-203, and Glu-204. The residue at position 201 (Lys-201) is an N6-carboxylysine. Catalysis depends on His-294, which acts as the Proton acceptor. Substrate is bound by residues Arg-295, His-327, and Ser-379.

It belongs to the RuBisCO large chain family. Type I subfamily. As to quaternary structure, heterohexadecamer of 8 large chains and 8 small chains; disulfide-linked. The disulfide link is formed within the large subunit homodimers. It depends on Mg(2+) as a cofactor. Post-translationally, the disulfide bond which can form in the large chain dimeric partners within the hexadecamer appears to be associated with oxidative stress and protein turnover.

The protein resides in the plastid. It carries out the reaction 2 (2R)-3-phosphoglycerate + 2 H(+) = D-ribulose 1,5-bisphosphate + CO2 + H2O. It catalyses the reaction D-ribulose 1,5-bisphosphate + O2 = 2-phosphoglycolate + (2R)-3-phosphoglycerate + 2 H(+). Its function is as follows. RuBisCO catalyzes two reactions: the carboxylation of D-ribulose 1,5-bisphosphate, the primary event in carbon dioxide fixation, as well as the oxidative fragmentation of the pentose substrate in the photorespiration process. Both reactions occur simultaneously and in competition at the same active site. This is Ribulose bisphosphate carboxylase large chain from Cuscuta gronovii (Common dodder).